The sequence spans 555 residues: 4-coumarate--CoA ligase-like 9 (555 aa).

The ATP site is built by Ser200, Ser201, Gly202, Thr203, Thr204, and Lys208. Residue Tyr248 coordinates (E)-4-coumaroyl-AMP. Arg269 contributes to the CoA binding site. An SBD1 region spans residues Asp271 to Glu342. Ala320 lines the (E)-4-coumaroyl-AMP pocket. Residues Glu342, Ala343, Thr347, Asp431, and Arg446 each contribute to the ATP site. 2 residues coordinate (E)-4-coumaroyl-AMP: Ala343 and Thr347. The tract at residues Ala343–Tyr410 is SBD2. Lys448 and Lys452 together coordinate (E)-4-coumaroyl-AMP. CoA-binding residues include Lys454 and Gly455. Lys537 is an ATP binding site.

The protein belongs to the ATP-dependent AMP-binding enzyme family. As to quaternary structure, interacts with STS1. Mg(2+) is required as a cofactor.

The catalysed reaction is (E)-4-coumarate + ATP + CoA = (E)-4-coumaroyl-CoA + AMP + diphosphate. The enzyme catalyses (E)-4-coumarate + ATP + H(+) = (E)-4-coumaroyl-AMP + diphosphate. It catalyses the reaction (E)-4-coumaroyl-AMP + CoA = (E)-4-coumaroyl-CoA + AMP + H(+). Functionally, carboxylate--CoA ligase that may use 4-coumarate as substrate. Follows a two-step reaction mechanism, wherein the carboxylate substrate first undergoes adenylation by ATP, followed by a thioesterification in the presence of CoA to yield the final CoA thioester. The protein is 4-coumarate--CoA ligase-like 9 (4CLL9) of Oryza sativa subsp. japonica (Rice).